Consider the following 1023-residue polypeptide: Sodium/potassium-transporting ATPase subunit alpha-1 (1023 aa).

The propeptide occupies 1–5; the sequence is MAFKV. Basic and acidic residues predominate over residues 1 to 11; sequence MAFKVGRDKYE. Residues 1–38 are disordered; the sequence is MAFKVGRDKYEPAAVSEQGDKKGKKGKKDRDMDELKKE. The Cytoplasmic segment spans residues 6-87; that stretch reads GRDKYEPAAV…NALTPPPTTP (82 aa). An N6-acetyllysine modification is found at Lys9. Tyr10 is modified (phosphotyrosine). Ser16 carries the phosphoserine; by PKC modification. Lys21 is subject to N6-acetyllysine. Basic and acidic residues predominate over residues 28–38; it reads KDRDMDELKKE. A phosphoserine mark is found at Ser40 and Ser47. The segment at 82–84 is phosphoinositide-3 kinase binding; that stretch reads PPP. The helical transmembrane segment at 88–108 threads the bilayer; the sequence is EWIKFCRQLFGGFSMLLWIGA. Residues 109–131 lie on the Extracellular side of the membrane; sequence ILCFLAYSIQAATEEEPQNDNLY. The chain crosses the membrane as a helical span at residues 132–152; the sequence is LGVVLSAVVIITGCFSYYQEA. The Cytoplasmic portion of the chain corresponds to 153 to 288; sequence KSSKIMESFK…GGQTPIAAEI (136 aa). The interval 216-235 is disordered; sequence SSLTGESEPQTRSPDFTNEN. Ser228 is subject to Phosphoserine. The residue at position 260 (Tyr260) is a Phosphotyrosine. The helical transmembrane segment at 289–308 threads the bilayer; the sequence is EHFIHIITGVAVFLGVSFFI. At 309 to 320 the chain is on the extracellular side; the sequence is LSLILEYTWLEA. Residues 321 to 338 traverse the membrane as a helical segment; the sequence is VIFLIGIIVANVPEGLLA. The Cytoplasmic segment spans residues 339 to 772; that stretch reads TVTVCLTLTA…EEGRLIFDNL (434 aa). Residue Asp376 is the 4-aspartylphosphate intermediate of the active site. 2 positions are modified to phosphoserine: Ser452 and Ser484. Lys487 contacts ATP. Tyr542 bears the Phosphotyrosine mark. The mediates interaction with SCN7A stretch occupies residues 596-717; the sequence is RAAVPDAVGK…QGAIVAVTGD (122 aa). The residue at position 661 (Lys661) is an N6-succinyllysine. Ser668 and Ser675 each carry phosphoserine. Asp717 and Asp721 together coordinate Mg(2+). A helical membrane pass occupies residues 773 to 792; that stretch reads KKSIAYTLTSNIPEITPFLI. Topologically, residues 793-802 are extracellular; it reads FIIANIPLPL. A helical transmembrane segment spans residues 803–823; that stretch reads GTVTILCIDLGTDMVPAISLA. Residues 824-843 lie on the Cytoplasmic side of the membrane; the sequence is YEQAESDIMKRQPRNPKTDK. Residues 844 to 866 traverse the membrane as a helical segment; sequence LVNERLISTAYGQIGMIQALGGF. Topologically, residues 867–918 are extracellular; that stretch reads FTYFVILAENGFLPLHLLGLRVDWDDRWINDVEDSYGQQWTYEQRKIVEFTC. Residues 919 to 938 traverse the membrane as a helical segment; the sequence is HTAFFVSIVVVQWADLVICK. Topologically, residues 939–951 are cytoplasmic; it reads TRRNSVFQQGMKN. Residue Ser943 is modified to Phosphoserine; by PKA. The chain crosses the membrane as a helical span at residues 952–970; sequence KILIFGLFEETALAAFLSY. Topologically, residues 971 to 985 are extracellular; that stretch reads CPGMGVALRMYPLKP. The chain crosses the membrane as a helical span at residues 986–1006; the sequence is TWWFCAFPYSLLIFVYDEVRK. Residues 1007–1023 are Cytoplasmic-facing; it reads LIIRRRPGGWVEKETYY.

This sequence belongs to the cation transport ATPase (P-type) (TC 3.A.3) family. Type IIC subfamily. The sodium/potassium-transporting ATPase is composed of a catalytic alpha subunit, an auxiliary non-catalytic beta subunit and an additional regulatory subunit. Interacts with regulatory subunit FXYD1. Interacts with regulatory subunit FXYD3. Interacts with SIK1. Interacts with SLC35G1 and STIM1. Interacts with CLN3; this interaction regulates the sodium/potassium-transporting ATPase complex localization at the plasma membrane. Interacts with SCN7A; activates ATP1A1 P-type sodium:potassium-exchanging transporter activity which indirectly signals to nearby neurons to regulate sodium homeostasis. Phosphorylation on Tyr-10 modulates pumping activity. Phosphorylation of Ser-943 by PKA modulates the response of ATP1A1 to PKC. Dephosphorylation by protein phosphatase 2A (PP2A) following increases in intracellular sodium, leading to increase catalytic activity.

Its subcellular location is the cell membrane. It is found in the basolateral cell membrane. The protein resides in the sarcolemma. The protein localises to the cell projection. It localises to the axon. Its subcellular location is the melanosome. It catalyses the reaction K(+)(out) + Na(+)(in) + ATP + H2O = K(+)(in) + Na(+)(out) + ADP + phosphate + H(+). In terms of biological role, this is the catalytic component of the active enzyme, which catalyzes the hydrolysis of ATP coupled with the exchange of sodium and potassium ions across the plasma membrane. This action creates the electrochemical gradient of sodium and potassium ions, providing the energy for active transport of various nutrients. Could also be part of an osmosensory signaling pathway that senses body-fluid sodium levels and controls salt intake behavior as well as voluntary water intake to regulate sodium homeostasis. The polypeptide is Sodium/potassium-transporting ATPase subunit alpha-1 (ATP1A1) (Pongo abelii (Sumatran orangutan)).